The chain runs to 155 residues: Microsomal glutathione S-transferase 1 (155 aa).

The Lumenal segment spans residues 3–9; it reads DLKQLMD. A helical membrane pass occupies residues 10–33; that stretch reads NEVLMAFTSYATIILAKMMFLSSA. The Cytoplasmic portion of the chain corresponds to 34–62; the sequence is TAFQRLTNKVFANPEDCAGFGKGENAKKF. Arg-38 contributes to the glutathione binding site. An N6-acetyllysine mark is found at Lys-42, Lys-55, and Lys-60. Residues 63-96 form a helical membrane-spanning segment; sequence LRTDEKVERVRRAHLNDLENIVPFLGIGLLYSLS. Positions 73, 74, 76, and 81 each coordinate glutathione. The residue at position 93 (Tyr-93) is a 3'-nitrotyrosine; in vitro. Topologically, residues 97-99 are lumenal; that stretch reads GPD. Residues 100–123 traverse the membrane as a helical segment; it reads LSTALIHFRIFVGARIYHTIAYLT. Position 121 (Tyr-121) interacts with glutathione. Over 124–128 the chain is Cytoplasmic; that stretch reads PLPQP. Residues 129–148 form a helical membrane-spanning segment; the sequence is NRGLAFFVGYGVTLSMAYRL. Topologically, residues 149–155 are lumenal; the sequence is LRSRLYL.

The protein belongs to the MAPEG family. In terms of assembly, homotrimer; The trimer binds only one molecule of glutathione. In terms of processing, in vitro, peroxynitrite induces nitration at Tyr-93 which activates the enzyme. As to expression, highest in the liver, followed by kidney and testis and much lower in seminal vesicles, spleen, lung and brain.

Its subcellular location is the endoplasmic reticulum membrane. The protein resides in the mitochondrion outer membrane. The enzyme catalyses RX + glutathione = an S-substituted glutathione + a halide anion + H(+). In vitro, can be activated by reagents that attack Cys-50 sulfhydryl, such as N-ethylmaleimide and via nitration of Tyr-93 by peroxynitrite. Functionally, conjugation of reduced glutathione to a wide number of exogenous and endogenous hydrophobic electrophiles. This chain is Microsomal glutathione S-transferase 1 (Mgst1), found in Rattus norvegicus (Rat).